A 541-amino-acid chain; its full sequence is Anthranilate synthase component 1 (541 aa).

L-tryptophan contacts are provided by residues Ser-61 and 311-313 (PYM). Residue 348 to 349 (GT) coordinates chorismate. Glu-381 serves as a coordination point for Mg(2+). Chorismate contacts are provided by residues Tyr-469, Arg-489, 503-505 (GAG), and Gly-505. Mg(2+) is bound at residue Glu-518.

This sequence belongs to the anthranilate synthase component I family. In terms of assembly, heterotetramer consisting of two non-identical subunits: a beta subunit (TrpG) and a large alpha subunit (TrpE). The cofactor is Mg(2+).

The enzyme catalyses chorismate + L-glutamine = anthranilate + pyruvate + L-glutamate + H(+). It functions in the pathway amino-acid biosynthesis; L-tryptophan biosynthesis; L-tryptophan from chorismate: step 1/5. Feedback inhibited by tryptophan. In terms of biological role, part of a heterotetrameric complex that catalyzes the two-step biosynthesis of anthranilate, an intermediate in the biosynthesis of L-tryptophan. In the first step, the glutamine-binding beta subunit (TrpG) of anthranilate synthase (AS) provides the glutamine amidotransferase activity which generates ammonia as a substrate that, along with chorismate, is used in the second step, catalyzed by the large alpha subunit of AS (TrpE) to produce anthranilate. In the absence of TrpG, TrpE can synthesize anthranilate directly from chorismate and high concentrations of ammonia. The chain is Anthranilate synthase component 1 (trpE) from Vibrio parahaemolyticus serotype O3:K6 (strain RIMD 2210633).